A 524-amino-acid polypeptide reads, in one-letter code: ORC1-type DNA replication protein 4 (524 aa).

The span at 1-23 (MTDKSNNPAPASDPSTTETSNDA) shows a compositional bias: polar residues. Positions 1 to 67 (MTDKSNNPAP…DDPSDEASRG (67 aa)) are disordered. Residues 128-132 (TGKTA), Tyr-325, and Arg-337 each bind ATP.

Belongs to the CDC6/cdc18 family.

Its function is as follows. Involved in regulation of DNA replication. The polypeptide is ORC1-type DNA replication protein 4 (cdc6d) (Haloarcula marismortui (strain ATCC 43049 / DSM 3752 / JCM 8966 / VKM B-1809) (Halobacterium marismortui)).